Here is a 465-residue protein sequence, read N- to C-terminus: Ribulose bisphosphate carboxylase large chain (465 aa).

Lysine 4 carries the post-translational modification N6,N6,N6-trimethyllysine. Substrate-binding residues include asparagine 113 and threonine 163. Lysine 165 serves as the catalytic Proton acceptor. Lysine 167 lines the substrate pocket. Mg(2+) is bound by residues lysine 191, aspartate 193, and glutamate 194. An N6-carboxylysine modification is found at lysine 191. Catalysis depends on histidine 284, which acts as the Proton acceptor. Substrate is bound by residues arginine 285, histidine 317, and serine 369.

It belongs to the RuBisCO large chain family. Type I subfamily. In terms of assembly, heterohexadecamer of 8 large chains and 8 small chains; disulfide-linked. The disulfide link is formed within the large subunit homodimers. Mg(2+) is required as a cofactor. In terms of processing, the disulfide bond which can form in the large chain dimeric partners within the hexadecamer appears to be associated with oxidative stress and protein turnover.

It is found in the plastid. The protein localises to the chloroplast. The enzyme catalyses 2 (2R)-3-phosphoglycerate + 2 H(+) = D-ribulose 1,5-bisphosphate + CO2 + H2O. It catalyses the reaction D-ribulose 1,5-bisphosphate + O2 = 2-phosphoglycolate + (2R)-3-phosphoglycerate + 2 H(+). RuBisCO catalyzes two reactions: the carboxylation of D-ribulose 1,5-bisphosphate, the primary event in carbon dioxide fixation, as well as the oxidative fragmentation of the pentose substrate in the photorespiration process. Both reactions occur simultaneously and in competition at the same active site. This chain is Ribulose bisphosphate carboxylase large chain, found in Byrsonima crassifolia (Cajuil cimarron).